The primary structure comprises 336 residues: Pyridoxal 5'-phosphate synthase subunit PdxS (336 aa).

A D-ribose 5-phosphate-binding site is contributed by Asp-64. Lys-121 (schiff-base intermediate with D-ribose 5-phosphate) is an active-site residue. Residue Gly-193 participates in D-ribose 5-phosphate binding. Lys-205 serves as a coordination point for D-glyceraldehyde 3-phosphate. D-ribose 5-phosphate-binding positions include Gly-254 and 275–276 (GS).

This sequence belongs to the PdxS/SNZ family. In the presence of PdxT, forms a dodecamer of heterodimers.

It carries out the reaction aldehydo-D-ribose 5-phosphate + D-glyceraldehyde 3-phosphate + L-glutamine = pyridoxal 5'-phosphate + L-glutamate + phosphate + 3 H2O + H(+). The protein operates within cofactor biosynthesis; pyridoxal 5'-phosphate biosynthesis. Its function is as follows. Catalyzes the formation of pyridoxal 5'-phosphate from ribose 5-phosphate (RBP), glyceraldehyde 3-phosphate (G3P) and ammonia. The ammonia is provided by the PdxT subunit. Can also use ribulose 5-phosphate and dihydroxyacetone phosphate as substrates, resulting from enzyme-catalyzed isomerization of RBP and G3P, respectively. In Pyrobaculum aerophilum (strain ATCC 51768 / DSM 7523 / JCM 9630 / CIP 104966 / NBRC 100827 / IM2), this protein is Pyridoxal 5'-phosphate synthase subunit PdxS.